Consider the following 661-residue polypeptide: Cyclic di-GMP phosphodiesterase PdeR (661 aa).

The PAS domain occupies glycine 109–serine 179. Residues asparagine 265–proline 397 enclose the GGDEF domain. Positions tyrosine 406–leucine 658 constitute an EAL domain.

As to quaternary structure, interacts with DgcM and MlrA.

The catalysed reaction is 3',3'-c-di-GMP + H2O = 5'-phosphoguanylyl(3'-&gt;5')guanosine + H(+). Functionally, part of a signaling cascade that regulates curli biosynthesis. The cascade is composed of two cyclic-di-GMP (c-di-GMP) control modules, in which c-di-GMP controlled by the DgcE/PdeH pair (module I) regulates the activity of the DgcM/PdeR pair (module II), which in turn regulates activity of the transcription factor MlrA and expression of the master biofilm regulator csgD. PdeR acts as a trigger enzyme that connects modules I and II. It inhibits DgcM and MlrA by direct interaction. Inhibition is relieved when PdeR binds and degrades c-di-GMP generated by module I. This chain is Cyclic di-GMP phosphodiesterase PdeR, found in Escherichia coli (strain K12).